Consider the following 397-residue polypeptide: Efflux pump periplasmic linker BepD (397 aa).

The signal sequence occupies residues 1-26; sequence MTLNRTIRCFAAGAAFIVFAAQPALA. The stretch at 98-139 forms a coiled coil; sequence APYQAELEKAQAQVAQAEAQYQQSIRDAERAEQLVQQKVQSA.

This sequence belongs to the membrane fusion protein (MFP) (TC 8.A.1) family. In terms of assembly, probably part of a tripartite efflux pump, which is composed of an outer membrane efflux protein, an inner membrane protein and a protein that expands the periplasmic space. Could form a tripartite pump with BepC and BepE.

Its subcellular location is the periplasm. Involved in resistance to several unrelated toxic compounds, such as dyes, detergents and antibiotics. The protein is Efflux pump periplasmic linker BepD (bepD) of Brucella suis biovar 1 (strain 1330).